Consider the following 125-residue polypeptide: Small ribosomal subunit protein uS12m (125 aa).

The interval 1 to 27 (MPTKNQLIRHGREEKRRTDRTRALDQC) is disordered. Residues 10–23 (HGREEKRRTDRTRA) show a composition bias toward basic and acidic residues.

It belongs to the universal ribosomal protein uS12 family.

Its subcellular location is the mitochondrion. Its function is as follows. Protein S12 is involved in the translation initiation step. In Triticum aestivum (Wheat), this protein is Small ribosomal subunit protein uS12m (RPS12).